Here is a 207-residue protein sequence, read N- to C-terminus: Glycerol-3-phosphate acyltransferase (207 aa).

Transmembrane regions (helical) follow at residues 4–24 (VVATVVFAVAAYLIGSVSFAV), 58–78 (ILTLLGDAAKGWLAVWLAQLL), 86–106 (DMGIALVVIAAFLGHLYPVFH), 120–140 (ILLALSGWLGLATLATWLIIA), and 162–182 (VLLFGIDPLAGAIAVMSVLLI).

It belongs to the PlsY family. As to quaternary structure, probably interacts with PlsX.

Its subcellular location is the cell inner membrane. It catalyses the reaction an acyl phosphate + sn-glycerol 3-phosphate = a 1-acyl-sn-glycero-3-phosphate + phosphate. The protein operates within lipid metabolism; phospholipid metabolism. Catalyzes the transfer of an acyl group from acyl-phosphate (acyl-PO(4)) to glycerol-3-phosphate (G3P) to form lysophosphatidic acid (LPA). This enzyme utilizes acyl-phosphate as fatty acyl donor, but not acyl-CoA or acyl-ACP. The chain is Glycerol-3-phosphate acyltransferase from Ralstonia nicotianae (strain ATCC BAA-1114 / GMI1000) (Ralstonia solanacearum).